Consider the following 216-residue polypeptide: 2-phospho-L-lactate guanylyltransferase (216 aa).

The protein belongs to the CofC family. In terms of assembly, homodimer.

The catalysed reaction is (2S)-2-phospholactate + GTP + H(+) = (2S)-lactyl-2-diphospho-5'-guanosine + diphosphate. It functions in the pathway cofactor biosynthesis; coenzyme F420 biosynthesis. Its function is as follows. Guanylyltransferase that catalyzes the activation of (2S)-2-phospholactate (2-PL) as (2S)-lactyl-2-diphospho-5'-guanosine, via the condensation of 2-PL with GTP. It is involved in the biosynthesis of coenzyme F420, a hydride carrier cofactor. This chain is 2-phospho-L-lactate guanylyltransferase, found in Methanocaldococcus infernus (strain DSM 11812 / JCM 15783 / ME).